We begin with the raw amino-acid sequence, 90 residues long: Small ribosomal subunit protein bS20 (90 aa).

The protein belongs to the bacterial ribosomal protein bS20 family.

In terms of biological role, binds directly to 16S ribosomal RNA. In Mesomycoplasma hyopneumoniae (strain 232) (Mycoplasma hyopneumoniae), this protein is Small ribosomal subunit protein bS20.